A 493-amino-acid polypeptide reads, in one-letter code: ATP synthase subunit beta 3 (493 aa).

Positions 113–138 (VPGDNGTPLPPGTPRRPIHRKPPPLA) are disordered. 170-177 (GGAGVGKT) contacts ATP.

The protein belongs to the ATPase alpha/beta chains family. F-type ATPases have 2 components, CF(1) - the catalytic core - and CF(0) - the membrane proton channel. CF(1) has five subunits: alpha(3), beta(3), gamma(1), delta(1), epsilon(1). CF(0) has three main subunits: a(1), b(2) and c(9-12). The alpha and beta chains form an alternating ring which encloses part of the gamma chain. CF(1) is attached to CF(0) by a central stalk formed by the gamma and epsilon chains, while a peripheral stalk is formed by the delta and b chains.

The protein localises to the cell inner membrane. The catalysed reaction is ATP + H2O + 4 H(+)(in) = ADP + phosphate + 5 H(+)(out). In terms of biological role, produces ATP from ADP in the presence of a proton gradient across the membrane. The catalytic sites are hosted primarily by the beta subunits. The protein is ATP synthase subunit beta 3 of Paraburkholderia xenovorans (strain LB400).